The sequence spans 456 residues: Bifunctional protein GlmU (456 aa).

The pyrophosphorylase stretch occupies residues Met-1–Arg-229. Residues Leu-11–Gly-14, Lys-25, Gln-76, Gly-81–Thr-82, Tyr-103–Asp-105, Gly-140, Glu-154, Asn-169, and Asn-227 contribute to the UDP-N-acetyl-alpha-D-glucosamine site. Asp-105 contributes to the Mg(2+) binding site. Position 227 (Asn-227) interacts with Mg(2+). The interval Leu-230–Ala-250 is linker. The tract at residues Gly-251–Lys-456 is N-acetyltransferase. UDP-N-acetyl-alpha-D-glucosamine contacts are provided by Arg-333 and Lys-351. His-363 serves as the catalytic Proton acceptor. Tyr-366 and Asn-377 together coordinate UDP-N-acetyl-alpha-D-glucosamine. Acetyl-CoA is bound by residues Ala-380, Asn-386–Tyr-387, Ser-405, Ala-423, and Arg-440.

In the N-terminal section; belongs to the N-acetylglucosamine-1-phosphate uridyltransferase family. It in the C-terminal section; belongs to the transferase hexapeptide repeat family. As to quaternary structure, homotrimer. It depends on Mg(2+) as a cofactor.

The protein localises to the cytoplasm. The enzyme catalyses alpha-D-glucosamine 1-phosphate + acetyl-CoA = N-acetyl-alpha-D-glucosamine 1-phosphate + CoA + H(+). The catalysed reaction is N-acetyl-alpha-D-glucosamine 1-phosphate + UTP + H(+) = UDP-N-acetyl-alpha-D-glucosamine + diphosphate. It functions in the pathway nucleotide-sugar biosynthesis; UDP-N-acetyl-alpha-D-glucosamine biosynthesis; N-acetyl-alpha-D-glucosamine 1-phosphate from alpha-D-glucosamine 6-phosphate (route II): step 2/2. It participates in nucleotide-sugar biosynthesis; UDP-N-acetyl-alpha-D-glucosamine biosynthesis; UDP-N-acetyl-alpha-D-glucosamine from N-acetyl-alpha-D-glucosamine 1-phosphate: step 1/1. The protein operates within bacterial outer membrane biogenesis; LPS lipid A biosynthesis. Functionally, catalyzes the last two sequential reactions in the de novo biosynthetic pathway for UDP-N-acetylglucosamine (UDP-GlcNAc). The C-terminal domain catalyzes the transfer of acetyl group from acetyl coenzyme A to glucosamine-1-phosphate (GlcN-1-P) to produce N-acetylglucosamine-1-phosphate (GlcNAc-1-P), which is converted into UDP-GlcNAc by the transfer of uridine 5-monophosphate (from uridine 5-triphosphate), a reaction catalyzed by the N-terminal domain. This chain is Bifunctional protein GlmU, found in Edwardsiella ictaluri (strain 93-146).